A 155-amino-acid polypeptide reads, in one-letter code: Ribosomal RNA large subunit methyltransferase H (155 aa).

Residues Leu73, Gly104, and 123–128 contribute to the S-adenosyl-L-methionine site; that span reads LSPLTL.

Belongs to the RNA methyltransferase RlmH family. As to quaternary structure, homodimer.

The protein resides in the cytoplasm. It catalyses the reaction pseudouridine(1915) in 23S rRNA + S-adenosyl-L-methionine = N(3)-methylpseudouridine(1915) in 23S rRNA + S-adenosyl-L-homocysteine + H(+). Specifically methylates the pseudouridine at position 1915 (m3Psi1915) in 23S rRNA. This chain is Ribosomal RNA large subunit methyltransferase H, found in Pseudomonas putida (strain GB-1).